We begin with the raw amino-acid sequence, 380 residues long: Cytochrome b (380 aa).

4 helical membrane passes run 33-53, 77-98, 113-133, and 178-198; these read FGSL…FLAM, WLIR…FIHV, WNIG…GYVL, and FFAF…VHLL. Heme b is bound by residues His-83 and His-97. 2 residues coordinate heme b: His-182 and His-196. His-201 lines the a ubiquinone pocket. The next 4 helical transmembrane spans lie at 226 to 246, 288 to 308, 320 to 340, and 347 to 367; these read IKDI…VLFF, LGGV…PLLN, ITQT…WIGG, and FTTI…IFMP.

It belongs to the cytochrome b family. In terms of assembly, the cytochrome bc1 complex contains 11 subunits: 3 respiratory subunits (MT-CYB, CYC1 and UQCRFS1), 2 core proteins (UQCRC1 and UQCRC2) and 6 low-molecular weight proteins (UQCRH/QCR6, UQCRB/QCR7, UQCRQ/QCR8, UQCR10/QCR9, UQCR11/QCR10 and a cleavage product of UQCRFS1). This cytochrome bc1 complex then forms a dimer. Heme b serves as cofactor.

It is found in the mitochondrion inner membrane. Functionally, component of the ubiquinol-cytochrome c reductase complex (complex III or cytochrome b-c1 complex) that is part of the mitochondrial respiratory chain. The b-c1 complex mediates electron transfer from ubiquinol to cytochrome c. Contributes to the generation of a proton gradient across the mitochondrial membrane that is then used for ATP synthesis. This chain is Cytochrome b (MT-CYB), found in Microryzomys minutus (Forest small rice rat).